Here is a 131-residue protein sequence, read N- to C-terminus: Sec-independent protein translocase protein TatB (131 aa).

A helical membrane pass occupies residues 2–22 (LGSLSWEHMLVLVVVGLVVLG). Residues 96–131 (AFDRPVNGAAAQPPPAPAPPPEPHRSGQTPFDADAT) form a disordered region. The segment covering 107 to 116 (QPPPAPAPPP) has biased composition (pro residues).

The protein belongs to the TatB family. As to quaternary structure, the Tat system comprises two distinct complexes: a TatABC complex, containing multiple copies of TatA, TatB and TatC subunits, and a separate TatA complex, containing only TatA subunits. Substrates initially bind to the TatABC complex, which probably triggers association of the separate TatA complex to form the active translocon.

It localises to the cell membrane. Part of the twin-arginine translocation (Tat) system that transports large folded proteins containing a characteristic twin-arginine motif in their signal peptide across membranes. Together with TatC, TatB is part of a receptor directly interacting with Tat signal peptides. TatB may form an oligomeric binding site that transiently accommodates folded Tat precursor proteins before their translocation. The polypeptide is Sec-independent protein translocase protein TatB (Mycolicibacterium paratuberculosis (strain ATCC BAA-968 / K-10) (Mycobacterium paratuberculosis)).